The sequence spans 932 residues: UPF0182 protein Syncc9902_1151 (932 aa).

9 consecutive transmembrane segments (helical) span residues 4–24, 40–60, 85–105, 124–144, 151–171, 201–221, 243–263, 293–313, and 315–335; these read FLWI…VEWV, MLQL…VLWL, VLMV…DLAI, MASE…VSLC, WVAV…WGVW, IQLG…HAVW, YRWL…LVWL, LLAF…IGHL, and RLLL…TPLT.

This sequence belongs to the UPF0182 family.

The protein resides in the cell membrane. The polypeptide is UPF0182 protein Syncc9902_1151 (Synechococcus sp. (strain CC9902)).